The primary structure comprises 146 residues: Angiogenin (146 aa).

The N-terminal stretch at 1-24 is a signal peptide; the sequence is MVMGLGLFLLVFMLGLGLTPPTLA. Position 25 is a pyrrolidone carboxylic acid (Gln-25). His-37 serves as the catalytic Proton acceptor. Arg-45 lines the tRNA pocket. 3 disulfide bridges follow: Cys-50-Cys-105, Cys-63-Cys-116, and Cys-81-Cys-131. A Nucleolar localization signal motif is present at residues 55-59; that stretch reads RRRHL. TRNA is bound by residues Cys-105 and Ile-127. The active-site Proton donor is His-138.

It belongs to the pancreatic ribonuclease family. In terms of assembly, homodimer. Interacts with RNH1; inhibiting ANG ribonuclease activity. Interacts with PCNA.

The protein resides in the secreted. Its subcellular location is the nucleus. It localises to the nucleolus. The protein localises to the cytoplasm. It is found in the stress granule. With respect to regulation, has weak tRNA ribonuclease activity by itself due to partial autoinhibition by its C-terminus, which folds into a short alpha-helix that partially occludes the substrate-binding site. In absence of stress, the ribonuclease activity is inhibited by RNH1 in the cytoplasm. In response to stress, dissociates from RNH1 in the cytoplasm and associates with cytoplasmic ribosomes with vacant A-sites: ribosomes directly activate the tRNA ribonuclease activity of ANG by refolding the C-terminal alpha-helix. In response to stress, the angiogenic activity of ANG is inhibited by RNH1 in the nucleus. In terms of biological role, secreted ribonuclease that can either promote or restrict cell proliferation of target cells, depending on the context. Endocytosed in target cells via its receptor PLXNB2 and translocates to the cytoplasm or nucleus. Under stress conditions, localizes to the cytoplasm and promotes the assembly of stress granules (SGs): specifically cleaves a subset of tRNAs within anticodon loops to produce tRNA-derived stress-induced fragments (tiRNAs), resulting in translation repression and inhibition of cell proliferation. tiRNas also prevent formation of apoptosome, thereby promoting cell survival. Preferentially cleaves RNAs between a pyrimidine and an adenosine residue, suggesting that it cleaves the anticodon loop of tRNA(Ala) (32-UUAGCAU-38) after positions 33 and 36. Cleaves a subset of tRNAs, including tRNA(Ala), tRNA(Glu), tRNA(Gly), tRNA(Lys), tRNA(Val), tRNA(His), tRNA(Asp) and tRNA(Sec). Under growth conditions and in differentiated cells, translocates to the nucleus and stimulates ribosomal RNA (rRNA) transcription, including that containing the initiation site sequences of 45S rRNA, thereby promoting cell growth and proliferation. Angiogenin induces vascularization of normal and malignant tissues via its ability to promote rRNA transcription. Involved in hematopoietic stem and progenitor cell (HSPC) growth and survival by promoting rRNA transcription in growth conditions and inhibiting translation in response to stress, respectively. Mediates the crosstalk between myeloid and intestinal epithelial cells to protect the intestinal epithelial barrier integrity: secreted by myeloid cells and promotes intestinal epithelial cells proliferation and survival. Also mediates osteoclast-endothelial cell crosstalk in growing bone: produced by osteoclasts and protects the neighboring vascular cells against senescence by promoting rRNA transcription. This Chlorocebus aethiops (Green monkey) protein is Angiogenin (ANG).